The following is a 662-amino-acid chain: Pro-neuregulin-1, membrane-bound isoform (662 aa).

The propeptide occupies 1-13 (MSERKEGRGKGKG). Residues 1–52 (MSERKEGRGKGKGKKKDRGSRGKPGPAEGDPSPALPPRLKEMKSQESAAGSK) are disordered. Residues 14–265 (KKKDRGSRGK…SKAEELYQKR (252 aa)) are Extracellular-facing. The region spanning 37 to 128 (PRLKEMKSQE…GNDSASANIT (92 aa)) is the Ig-like C2-type domain. C57 and C112 are oxidised to a cystine. 3 N-linked (GlcNAc...) asparagine glycosylation sites follow: N120, N126, and N164. In terms of domain architecture, EGF-like spans 178–222 (HLIKCAEKEKTFCVNGGECFTVKDLSNPSRYLCKCPNEFTGDRCQ). Intrachain disulfides connect C182–C196, C190–C210, and C212–C221. Residues 266 to 288 (VLTITGICIALLVVGIMCVVAYC) form a helical membrane-spanning segment. Over 289-662 (KTKKQRQKLH…VIANQDPIAV (374 aa)) the chain is Cytoplasmic. A compositionally biased stretch (low complexity) spans 358–373 (SHYTSTAHHSTTVTQT). Disordered regions lie at residues 358 to 383 (SHYTSTAHHSTTVTQTPSHSWSNGHT), 398 to 480 (SVEN…PVSS), and 547 to 610 (YETT…DTPF). Polar residues predominate over residues 374-383 (PSHSWSNGHT). Residues 410 to 420 (GPRGRLHGLGG) show a composition bias toward gly residues. Residues 425-445 (SFLRHARETPDSYRDSPHSER) are compositionally biased toward basic and acidic residues. Residues 564-574 (TNSRRAKRTKP) show a composition bias toward basic residues. Over residues 585 to 596 (DSNTSSVSSNSE) the composition is skewed to low complexity.

It belongs to the neuregulin family. In terms of assembly, the cytoplasmic domain interacts with the LIM domain region of LIMK1. Forms a ternary complex with ERBB3 and ITGAV:ITGB3 or ITGA6:ITGB4. Interacts with NRDC and BACE1. Proteolytic cleavage close to the plasma membrane on the external face leads to the release of the soluble growth factor form. In terms of processing, N- and O-glycosylated. Extensive glycosylation precedes the proteolytic cleavage. Widely expressed. Most tissues contain isoform alpha2A and isoform alpha2B. Isoform Alpha2 and isoform beta2 are the predominant forms in mesenchymal and non-neuronal organs. Isoform Beta1 is enriched in brain and spinal cord, but not in muscle and heart. Isoform Alpha2C is highly expressed in spinal cord, moderately in lung, brain, ovary, and stomach, in low amounts in the kidney, skin and heart and not detected in the liver, spleen, and placenta.

The protein resides in the cell membrane. It is found in the secreted. In terms of biological role, direct ligand for ERBB3 and ERBB4 tyrosine kinase receptors. Concomitantly recruits ERBB1 and ERBB2 coreceptors, resulting in ligand-stimulated tyrosine phosphorylation and activation of the ERBB receptors. The multiple isoforms perform diverse functions such as inducing growth and differentiation of epithelial, glial, neuronal, and skeletal muscle cells; inducing expression of acetylcholine receptor in synaptic vesicles during the formation of the neuromuscular junction; stimulating lobuloalveolar budding and milk production in the mammary gland and inducing differentiation of mammary tumor cells; stimulating Schwann cell proliferation; implication in the development of the myocardium such as trabeculation of the developing heart. Binds to ERBB4 and ERBB3. Acts as a ligand for integrins and binds (via EGF domain) to integrins ITGAV:ITGB3 or ITGA6:ITGB4. Its binding to integrins and subsequent ternary complex formation with integrins and ERRB3 are essential for NRG1-ERBB signaling. Induces the phosphorylation and activation of MAPK3/ERK1, MAPK1/ERK2 and AKT1, and ligand-dependent ERBB4 endocytosis is essential for the NRG1-mediated activation of these kinases in neurons. The protein is Pro-neuregulin-1, membrane-bound isoform (Nrg1) of Rattus norvegicus (Rat).